Reading from the N-terminus, the 227-residue chain is Pre-hexon-linking protein VIII (227 aa).

T64 carries the post-translational modification Phosphothreonine; by host. A propeptide spanning residues 112-157 is cleaved from the precursor; sequence FRHRVRSPGQGITHLTIRGRGIQLNDESVSSSLGLRPDGTFQIGGA. Phosphoserine; by host is present on residues S118 and S174.

Belongs to the adenoviridae hexon-linking protein family. As to quaternary structure, interacts with the peripentonal hexons as well as the hexons in the facets. Part of a complex composed of the core-capsid bridging protein, the endosome lysis protein VI and the hexon-linking protein VIII; these interactions bridge the virus core to the capsid. In terms of processing, cleaved by the viral protease during virion maturation. May cause the middle segment to be shed from the capsid.

The protein localises to the virion. Its subcellular location is the host nucleus. In terms of biological role, structural component of the virion that acts as a cement protein on the capsid interior and which glue the peripentonal hexons and group-of-nine hexons together. The polypeptide is Pre-hexon-linking protein VIII (Human adenovirus C serotype 5 (HAdV-5)).